The primary structure comprises 165 residues: Protein NKG7 (165 aa).

The next 4 membrane-spanning stretches (helical) occupy residues 9-29 (LLGG…DFWF), 61-81 (FSIM…LSCF), 92-112 (LVST…MAVY), and 133-153 (FYLG…SLGA).

The protein belongs to the PMP-22/EMP/MP20 family. In terms of tissue distribution, expressed in activated T-cells, in kidney, liver, lung and pancreas. Not expressed in brain, heart, or skeletal muscle. Expressed at high levels in TCR gamma delta-expressing CTL clones, and in some TCR alpha beta-expressing CTL clones (both CD4+ and CD8+), but is not expressed in other TCR alpha beta-expressing CTL clones and in cell lines representing B-cells, monocytes, and myeloid cells.

It localises to the cell membrane. Its subcellular location is the cytolytic granule membrane. Functionally, regulates cytotoxic granule exocytosis in effector lymphocytes, thus acting as a critical mediator of inflammation in a broad range of infectious and non-infectious diseases. Essential for cytotoxic degranulation of natural killer (NK) cells and CD8(+) T-cells and for the activation of CD4(+) T-cells following infection. Plays a critical role in CD8(+) T-cell and NK cell-mediated cytolysis of target cells and contributes to the cytolytic activity via the perforin/granzyme pathway by enhancing exocytosis of LAMP1-carrying lytic granules. Contributes to NK cell-mediated control of cancer metastasis. The polypeptide is Protein NKG7 (NKG7) (Homo sapiens (Human)).